The chain runs to 382 residues: MSQSNNVTDLARANIRALTPYMSARRLGGNGDVWLNANEYPLGTEYQLTTQTFNRYPECQPKHVIERYAAYAGLPPEQVLVSRGADEGIELLIRAFCEPGQDAILFCPPTYGMYAVSAETFGVERRTVPAQADWQLDLPAIANNLEQVKVIYVCSPNNPTGNLINPADLQAVLALAQGRAIVAIDEAYIEFCPQASVSNWLKDYPNLVILRTLSKAFALAGLRCGFTLANSDIIQLLLKVIAPYPLSTPVADIAAQALSPKGIEQMRQRVSEVRANRAWLQSALQDCACVEQVFTSESNYLLARFTASSSVFNALWDQGIILRDQNKQPGLANCLRITIGTRQECERVIAALAPLPGIDNSNNIDNQNKTYSQTSSIRKGTI.

Residue K215 is modified to N6-(pyridoxal phosphate)lysine. The interval 363 to 382 (NIDNQNKTYSQTSSIRKGTI) is disordered.

The protein belongs to the class-II pyridoxal-phosphate-dependent aminotransferase family. Histidinol-phosphate aminotransferase subfamily. As to quaternary structure, homodimer. It depends on pyridoxal 5'-phosphate as a cofactor.

The catalysed reaction is L-histidinol phosphate + 2-oxoglutarate = 3-(imidazol-4-yl)-2-oxopropyl phosphate + L-glutamate. The protein operates within amino-acid biosynthesis; L-histidine biosynthesis; L-histidine from 5-phospho-alpha-D-ribose 1-diphosphate: step 7/9. In Yersinia pestis bv. Antiqua (strain Antiqua), this protein is Histidinol-phosphate aminotransferase.